Here is a 411-residue protein sequence, read N- to C-terminus: MNALAATSRNFRQAARLLGLDSKLQKSLLIPLREIKVECTIPKDDGTLATFVGFRVQHDNSRGPMKGGIRYHPEVDPDEVNALAQLMTWKTAVAAVPYGGAKGGIGCTPGELSRSELERLTRVFTQKIHDLIGINTDVPAPDMGTNAQTMAWILDEYSKFHGHSPAVVTGKPIDLGGSLGRDAATGRGVMYATEALLTEYSESISGSTFVIQGLGNVGSWAAKLIHQKGGKIVAVGDVTGAIRNKSGIDIPALLKHRSEGGSLEDFYGAEVMDAAELLVHECDVLVPCALGGVLNRENAAEVKARFIIEGANHPTDTEADEILAKKGVIVLPDIYANSGGVVVSYFEWVQNIQGFMWDEEKVNRELQKYMKNAFQNIKDMCKSQNCNLRMGAFTLGVNRVAKATLLRGWEA.

A mitochondrion-targeting transit peptide spans 1–18 (MNALAATSRNFRQAARLL). Lysine 102 is an active-site residue.

Belongs to the Glu/Leu/Phe/Val dehydrogenases family. Barely expressed in leaves, spikelets and roots. Glumes and stamens specific accumulation.

Its subcellular location is the mitochondrion. The enzyme catalyses L-glutamate + NAD(+) + H2O = 2-oxoglutarate + NH4(+) + NADH + H(+). It catalyses the reaction L-glutamate + NADP(+) + H2O = 2-oxoglutarate + NH4(+) + NADPH + H(+). The polypeptide is Glutamate dehydrogenase 3, mitochondrial (GDH3) (Oryza sativa subsp. japonica (Rice)).